A 469-amino-acid polypeptide reads, in one-letter code: Glutamate--tRNA ligase (469 aa).

The short motif at 9–19 (PSPTGFLHVGG) is the 'HIGH' region element. The 'KMSKS' region motif lies at 236–240 (KLSKR). Lys239 provides a ligand contact to ATP.

The protein belongs to the class-I aminoacyl-tRNA synthetase family. Glutamate--tRNA ligase type 1 subfamily. In terms of assembly, monomer.

It localises to the cytoplasm. The catalysed reaction is tRNA(Glu) + L-glutamate + ATP = L-glutamyl-tRNA(Glu) + AMP + diphosphate. Catalyzes the attachment of glutamate to tRNA(Glu) in a two-step reaction: glutamate is first activated by ATP to form Glu-AMP and then transferred to the acceptor end of tRNA(Glu). This chain is Glutamate--tRNA ligase, found in Shewanella amazonensis (strain ATCC BAA-1098 / SB2B).